The primary structure comprises 182 residues: Fimbrial subunit type 1 (182 aa).

The first 23 residues, 1-23 (MKIKTLAIVVLSALSLSSAAALA), serve as a signal peptide directing secretion. A disulfide bridge connects residues C44 and C84.

The protein belongs to the fimbrial protein family.

The protein resides in the fimbrium. This Klebsiella pneumoniae protein is Fimbrial subunit type 1.